A 299-amino-acid polypeptide reads, in one-letter code: Regucalcin (299 aa).

A divalent metal cation is bound at residue glutamate 18. The substrate site is built by arginine 101, asparagine 103, and glutamate 121. Position 144 is an N6-succinyllysine (lysine 144). Residues asparagine 154 and aspartate 204 each contribute to the a divalent metal cation site. Aspartate 204 (proton donor/acceptor) is an active-site residue. An N6-succinyllysine mark is found at lysine 244 and lysine 253. The residue at position 268 (serine 268) is a Phosphoserine.

The protein belongs to the SMP-30/CGR1 family. Monomer. Requires Zn(2+) as cofactor. Mn(2+) serves as cofactor. It depends on Ca(2+) as a cofactor. The cofactor is Mg(2+). Co(2+) is required as a cofactor. In terms of processing, the N-terminus is blocked. As to expression, detected in liver (at protein level). Hepatocytes and renal proximal tubular epithelium.

The protein resides in the cytoplasm. It carries out the reaction D-glucono-1,5-lactone + H2O = D-gluconate + H(+). Its pathway is cofactor biosynthesis; L-ascorbate biosynthesis via UDP-alpha-D-glucuronate pathway; L-ascorbate from UDP-alpha-D-glucuronate: step 3/4. In terms of biological role, gluconolactonase with low activity towards other sugar lactones, including gulonolactone and galactonolactone. Catalyzes a key step in ascorbic acid (vitamin C) biosynthesis. Can also hydrolyze diisopropyl phosphorofluoridate and phenylacetate (in vitro). Calcium-binding protein. Modulates Ca(2+) signaling, and Ca(2+)-dependent cellular processes and enzyme activities. In Rattus norvegicus (Rat), this protein is Regucalcin (Rgn).